The primary structure comprises 205 residues: Dephospho-CoA kinase (205 aa).

One can recognise a DPCK domain in the interval 4–203; sequence KIGITGGIGS…QKIHYLCSAK (200 aa). 12–17 is a binding site for ATP; that stretch reads GSGKSV.

The protein belongs to the CoaE family.

The protein resides in the cytoplasm. The enzyme catalyses 3'-dephospho-CoA + ATP = ADP + CoA + H(+). It functions in the pathway cofactor biosynthesis; coenzyme A biosynthesis; CoA from (R)-pantothenate: step 5/5. In terms of biological role, catalyzes the phosphorylation of the 3'-hydroxyl group of dephosphocoenzyme A to form coenzyme A. The sequence is that of Dephospho-CoA kinase from Bacteroides fragilis (strain ATCC 25285 / DSM 2151 / CCUG 4856 / JCM 11019 / LMG 10263 / NCTC 9343 / Onslow / VPI 2553 / EN-2).